A 261-amino-acid chain; its full sequence is Phosphonates import ATP-binding protein PhnC (261 aa).

Residues 9–253 (IQLKDVSKIY…VFDDIYNGGN (245 aa)) form the ABC transporter domain. Residue 42–49 (GLSGAGKS) participates in ATP binding.

The protein belongs to the ABC transporter superfamily. Phosphonates importer (TC 3.A.1.9.1) family. In terms of assembly, the complex is composed of two ATP-binding proteins (PhnC), two transmembrane proteins (PhnE) and a solute-binding protein (PhnD).

Its subcellular location is the cell membrane. The catalysed reaction is phosphonate(out) + ATP + H2O = phosphonate(in) + ADP + phosphate + H(+). Functionally, part of the ABC transporter complex PhnCDE involved in phosphonates import. Responsible for energy coupling to the transport system. This is Phosphonates import ATP-binding protein PhnC from Lactobacillus gasseri (strain ATCC 33323 / DSM 20243 / BCRC 14619 / CIP 102991 / JCM 1131 / KCTC 3163 / NCIMB 11718 / NCTC 13722 / AM63).